Consider the following 483-residue polypeptide: Glutamate--tRNA ligase (483 aa).

Positions 11–21 match the 'HIGH' region motif; sequence PSPTGLLHIGN. A 'KMSKS' region motif is present at residues 255-259; the sequence is KLSKR. Lys-258 lines the ATP pocket.

This sequence belongs to the class-I aminoacyl-tRNA synthetase family. Glutamate--tRNA ligase type 1 subfamily. As to quaternary structure, monomer.

The protein localises to the cytoplasm. The enzyme catalyses tRNA(Glu) + L-glutamate + ATP = L-glutamyl-tRNA(Glu) + AMP + diphosphate. Catalyzes the attachment of glutamate to tRNA(Glu) in a two-step reaction: glutamate is first activated by ATP to form Glu-AMP and then transferred to the acceptor end of tRNA(Glu). The chain is Glutamate--tRNA ligase from Lactococcus lactis subsp. cremoris (strain MG1363).